Consider the following 473-residue polypeptide: mRNA export factor ICP27 homolog (473 aa).

Disordered stretches follow at residues 57 to 81 (QELL…NSIY) and 123 to 143 (QTKR…NFPM). The Zn(2+) site is built by Cys362, His438, Cys442, and Cys447. A CHC2-type zinc finger spans residues 362–447 (CKYGTEKRSM…HTRRCSDPAC (86 aa)).

Belongs to the HHV-1 ICP27 protein family. As to quaternary structure, associates in a complex with RNA, and host export factors NXF1/TAP and ALYREF; these interactions allow nuclear export of viral transcripts.

The protein resides in the host cytoplasm. It localises to the host nucleus. Its function is as follows. Multifunctional regulator of the expression of viral genes that mediates nuclear export of viral intronless mRNAs. This immediate early (EI) protein promotes the nuclear export of viral intronless mRNAs by interacting with mRNAs and host NXF1/TAP. The polypeptide is mRNA export factor ICP27 homolog (Gallus gallus (Chicken)).